A 327-amino-acid chain; its full sequence is Polyprenyl transferase andD (327 aa).

8 helical membrane-spanning segments follow: residues 49-69, 81-101, 140-160, 174-194, 201-221, 244-264, 271-291, and 307-327; these read LGYI…ASIA, ITLL…WDDI, FAFV…MLFF, PQLI…GLNL, IPMA…DIIY, CLDA…VIAG, APFF…LAMA, and CCTS…VWRS.

The protein belongs to the UbiA prenyltransferase family. It depends on Mg(2+) as a cofactor.

It is found in the membrane. The protein operates within secondary metabolite biosynthesis; terpenoid biosynthesis. Polyprenyl transferase; part of the gene cluster that mediates the biosynthesis of anditomin, a fungal meroterpenoid. The first step of the pathway is the synthesis of 3,5-dimethylorsellinic acid (DMOA) by the polyketide synthase andM. DMOA is then converted to the phthalide compound 5,7-dihydroxy-4,6-dimethylphthalide (DHDMP) by the cytochrome P450 monooxygenase andK, which is further prenylated by the prenyltransferase andD to yield farnesyl-DHDMP. Further epoxidation by the FAD-dependent monooxygenase andE leads to epoxyfarnesyl-DHDMP. The next step involves the terpene cyclase andB that converts epoxyfarnesyl-DHDMP into preandiloid A through opening of the epoxide ring followed by the cyclization of the farnesyl moiety. Preandiloid A is in turn oxidized at the C-3 hydroxyl group to yield preandiloid B by the dehydrogenase andC. The dioxygenase andA is solely responsible for the dehydrogenation of preandiloid B leading to the enone preandiloid C, as well as for the intriguing structural rearrangement to generate the bicyclo[2.2.2]octane core, transforming preandiloid C into andiconin. FAD-binding monooxygenase andJ then produces andilesin D which is reduced by dehydrogenase andI to yield andilesin A. Action of acetyltransferase andG followed by a spontaneous acetate elimination leads then to andilesin B, which is in turn substrate of the short chain dehydrogenase andH to yield andilesin C. Finally, the dioxygenase andF catalyzes the transformation of andilesin C to anditomin. The polypeptide is Polyprenyl transferase andD (Emericella variicolor (Aspergillus stellatus)).